The sequence spans 258 residues: Aquaglyceroporin (258 aa).

At Met1 to Arg11 the chain is on the cytoplasmic side. A helical membrane pass occupies residues Glu12–Ala32. Residues Asn33–Lys45 lie on the Extracellular side of the membrane. Residues Leu46 to Gly66 form a helical membrane-spanning segment. The glycerol site is built by Gly66, Ala67, and Asn70. Residues Ala67–Lys87 lie on the Cytoplasmic side of the membrane. A helical membrane pass occupies residues Ile88–Gly108. At Leu109–Thr135 the chain is on the extracellular side. Ser127 provides a ligand contact to glycerol. A helical transmembrane segment spans residues Gly136–Val156. Topologically, residues Asp157–Ser171 are cytoplasmic. Residues Val172–Leu192 form a helical membrane-spanning segment. Residues Gly189, Phe190, Asn193, and Arg196 each contribute to the glycerol site. Topologically, residues Asn193–Asn217 are extracellular. The chain crosses the membrane as a helical span at residues Phe218–Tyr238. Over Asp239–Leu258 the chain is Cytoplasmic.

The protein belongs to the MIP/aquaporin (TC 1.A.8) family. As to quaternary structure, homotetramer.

Its subcellular location is the cell membrane. The enzyme catalyses H2O(in) = H2O(out). The catalysed reaction is glycerol(in) = glycerol(out). It carries out the reaction urea(in) = urea(out). It catalyses the reaction NH4(+)(in) = NH4(+)(out). The enzyme catalyses methylamine(out) = methylamine(in). The catalysed reaction is formamide(out) = formamide(in). Functionally, mediates water and glycerol transport across the cell membrane. Permeable to sugar alcohols of up to five carbons and urea. Permeable to ammonia, methylamine and formamide. The protein is Aquaglyceroporin of Plasmodium falciparum (isolate 3D7).